Consider the following 525-residue polypeptide: MSFDKLLQALPPPLPLPAILIATFIFFFSCWILHQSQRNERLPPGPYPWPIIGNFHQVRLPLHRTLKNLAEKYGPILFLRFGSVPTVVVSSSEKAKHFLKTHDLIFASRPPTSVGKYFFYNFKDIAFSPYGDHWRKMRKICVLELLTSKRIESFKHVRQEELSAMIHSIWEESESGRIAVNVSKAISTSLANILWRILARKKFSDNDLGADGKGFADLVVEVSIAVGSLNIGDFIPYLDCLDLQGIKRALKKANARFDAFAEKMIDEHINASTIRNGEADAGCHVKDIIDVLLEMAKNDNTGAKVTREIIKAITYELFSAGMETSANVLEWAMSELLRHPHAMKKLQQEIESVVGQQGTVKESDLASIVYLHCVVKETLRLYPSLPLALPHESLEAVTVGGYYIPKKTMVIMNLWAIGRDPSVWGADASEFKPERFMQMEENGIDLSGGQSDFRMLPFGAGRRTCPGSAMAILTVEFTLAQLLHTFDWRVEGDPSELDMKEACATKMPRQTPLLAYPRLRLPRCP.

A helical membrane pass occupies residues 13 to 33 (PLPLPAILIATFIFFFSCWIL). Position 465 (Cys-465) interacts with heme.

It belongs to the cytochrome P450 family. Requires heme as cofactor.

It localises to the membrane. The protein is Cytochrome P450 750A1 (CYP750A1) of Pinus taeda (Loblolly pine).